Consider the following 318-residue polypeptide: Aspartate carbamoyltransferase catalytic subunit (318 aa).

Carbamoyl phosphate contacts are provided by Arg-66 and Thr-67. Lys-94 contacts L-aspartate. Arg-116, His-144, and Gln-147 together coordinate carbamoyl phosphate. Arg-177 and Arg-231 together coordinate L-aspartate. Carbamoyl phosphate is bound by residues Gly-272 and Pro-273.

Belongs to the aspartate/ornithine carbamoyltransferase superfamily. ATCase family. In terms of assembly, heterododecamer (2C3:3R2) of six catalytic PyrB chains organized as two trimers (C3), and six regulatory PyrI chains organized as three dimers (R2).

It catalyses the reaction carbamoyl phosphate + L-aspartate = N-carbamoyl-L-aspartate + phosphate + H(+). The protein operates within pyrimidine metabolism; UMP biosynthesis via de novo pathway; (S)-dihydroorotate from bicarbonate: step 2/3. In terms of biological role, catalyzes the condensation of carbamoyl phosphate and aspartate to form carbamoyl aspartate and inorganic phosphate, the committed step in the de novo pyrimidine nucleotide biosynthesis pathway. This chain is Aspartate carbamoyltransferase catalytic subunit, found in Frankia casuarinae (strain DSM 45818 / CECT 9043 / HFP020203 / CcI3).